The following is a 582-amino-acid chain: MRIIMPVEFSRIVRDVERLIAVEKYSLQGVVDGDKLLVVGFSEGSVNAYLYDGGETVKLNREPINSVLDPHYGVGRVILVRDVSKGAEQHALFKVNTSRPGEEQRLEAVKPMRILSGVDTGEAVVFTGATEDRVALYALDGGGLRELARLPGFGFVSDIRGDLIAGLGFFGGGRVSLFTSNLSSGGLRVFDSGEGSFSSASISPGMKVTAGLETAREARLVTVDPRDGSVEDLELPSKDFSSYRPTAITWLGYLPDGRLAVVARREGRSAVFIDGERVEAPQGNHGRVVLWRGKLVTSHTSLSTPPRIVSLPSGEPLLEGGLPEDLRRSIAGSRLVWVESFDGSRVPTYVLESGRAPTPGPTVVLVHGGPFAEDSDSWDTFAASLAAAGFHVVMPNYRGSTGYGEEWRLKIIGDPCGGELEDVSAAARWARESGLASELYIMGYSYGGYMTLCALTMKPGLFKAGVAGASVVDWEEMYELSDAAFRNFIEQLTGGSREIMRSRSPINHVDRIKEPLALIHPQNDSRTPLKPLLRLMGELLARGKTFEAHIIPDAGHAINTMEDAVKILLPAVFFLATQRERR.

Active-site charge relay system residues include Ser-445, Asp-524, and His-556.

This sequence belongs to the peptidase S9C family.

The protein localises to the cytoplasm. The enzyme catalyses Cleavage of an N-acetyl or N-formyl amino acid from the N-terminus of a polypeptide.. In terms of biological role, this enzyme catalyzes the hydrolysis of the N-terminal peptide bond of an N-acetylated peptide to generate an N-acetylated amino acid and a peptide with a free N-terminus. The chain is Acylamino-acid-releasing enzyme from Aeropyrum pernix (strain ATCC 700893 / DSM 11879 / JCM 9820 / NBRC 100138 / K1).